A 310-amino-acid chain; its full sequence is Ribosomal RNA small subunit methyltransferase H (310 aa).

Residues 33 to 35 (AGH), Asp53, Phe79, Asp100, and Gln107 each bind S-adenosyl-L-methionine.

Belongs to the methyltransferase superfamily. RsmH family.

It localises to the cytoplasm. It catalyses the reaction cytidine(1402) in 16S rRNA + S-adenosyl-L-methionine = N(4)-methylcytidine(1402) in 16S rRNA + S-adenosyl-L-homocysteine + H(+). Specifically methylates the N4 position of cytidine in position 1402 (C1402) of 16S rRNA. The polypeptide is Ribosomal RNA small subunit methyltransferase H (Clostridium perfringens (strain 13 / Type A)).